The primary structure comprises 331 residues: MSSSKDCKATSNVDQTIPASNVNSGDFISSNTSSSNSENSNIQGKHYTQVGEDADNSFISENTPKNTFESTQTYENLESISKNEPTSEASKPLLNELVPEEPLPREPPLPNEPVPEEPLPGEPPLPDEPVPEEPLPGEPPLPNEPVPETNCHKESPLSDETVSETSKNDTSNSPTNENQAQPSIAWSEGHRIAAIWDPSQQAYYFWDTLTNTTSWNNPLEDEEQTSPLDYTAKVQFNRLSGKFMPKWASPELRSEENKAHKHMEQYFDINSSLNSHNGQSLLAERRNKRYTRKEMEQMKRRTKEKKEMKRRALYDIASDEKDFRRRKIIRY.

Positions 1 to 184 are disordered; the sequence is MSSSKDCKAT…TNENQAQPSI (184 aa). The span at 9–22 shows a compositional bias: polar residues; sequence ATSNVDQTIPASNV. Low complexity predominate over residues 23–41; that stretch reads NSGDFISSNTSSSNSENSN. A compositionally biased stretch (polar residues) spans 57–89; that stretch reads SFISENTPKNTFESTQTYENLESISKNEPTSEA. Positions 105 to 145 are enriched in pro residues; the sequence is REPPLPNEPVPEEPLPGEPPLPDEPVPEEPLPGEPPLPNEP. Polar residues predominate over residues 158 to 184; the sequence is SDETVSETSKNDTSNSPTNENQAQPSI. One can recognise a WW domain in the interval 187–220; the sequence is SEGHRIAAIWDPSQQAYYFWDTLTNTTSWNNPLE. The interval 290 to 309 is disordered; that stretch reads YTRKEMEQMKRRTKEKKEMK. Residues 292-309 are compositionally biased toward basic and acidic residues; the sequence is RKEMEQMKRRTKEKKEMK.

Its subcellular location is the nucleus. This chain is WW domain-containing protein C2F3.14c, found in Schizosaccharomyces pombe (strain 972 / ATCC 24843) (Fission yeast).